Here is a 382-residue protein sequence, read N- to C-terminus: Galactokinase (382 aa).

34 to 37 (EHTD) serves as a coordination point for substrate. 124-130 (GAGLSSS) is a binding site for ATP. Ser130 and Glu162 together coordinate Mg(2+). The active-site Proton acceptor is the Asp174. Tyr223 is a substrate binding site.

Belongs to the GHMP kinase family. GalK subfamily.

The protein localises to the cytoplasm. The catalysed reaction is alpha-D-galactose + ATP = alpha-D-galactose 1-phosphate + ADP + H(+). It functions in the pathway carbohydrate metabolism; galactose metabolism. In terms of biological role, catalyzes the transfer of the gamma-phosphate of ATP to D-galactose to form alpha-D-galactose-1-phosphate (Gal-1-P). This is Galactokinase from Salmonella newport (strain SL254).